The sequence spans 403 residues: Imidazolonepropionase (403 aa).

2 residues coordinate Fe(3+): H68 and H70. Zn(2+) contacts are provided by H68 and H70. Residues R77, Y140, and H173 each contribute to the 4-imidazolone-5-propanoate site. Y140 contributes to the N-formimidoyl-L-glutamate binding site. H238 serves as a coordination point for Fe(3+). H238 is a Zn(2+) binding site. Q241 is a 4-imidazolone-5-propanoate binding site. D313 contributes to the Fe(3+) binding site. D313 serves as a coordination point for Zn(2+). Residues N315 and G317 each contribute to the N-formimidoyl-L-glutamate site. T318 contacts 4-imidazolone-5-propanoate.

Belongs to the metallo-dependent hydrolases superfamily. HutI family. Zn(2+) is required as a cofactor. The cofactor is Fe(3+).

Its subcellular location is the cytoplasm. It catalyses the reaction 4-imidazolone-5-propanoate + H2O = N-formimidoyl-L-glutamate. The protein operates within amino-acid degradation; L-histidine degradation into L-glutamate; N-formimidoyl-L-glutamate from L-histidine: step 3/3. Catalyzes the hydrolytic cleavage of the carbon-nitrogen bond in imidazolone-5-propanoate to yield N-formimidoyl-L-glutamate. It is the third step in the universal histidine degradation pathway. The protein is Imidazolonepropionase of Psychromonas ingrahamii (strain DSM 17664 / CCUG 51855 / 37).